We begin with the raw amino-acid sequence, 290 residues long: Ribosomal RNA small subunit methyltransferase A (290 aa).

The S-adenosyl-L-methionine site is built by Asn-27, Leu-29, Gly-54, Glu-75, Asp-100, and Asn-125.

The protein belongs to the class I-like SAM-binding methyltransferase superfamily. rRNA adenine N(6)-methyltransferase family. RsmA subfamily.

It localises to the cytoplasm. It carries out the reaction adenosine(1518)/adenosine(1519) in 16S rRNA + 4 S-adenosyl-L-methionine = N(6)-dimethyladenosine(1518)/N(6)-dimethyladenosine(1519) in 16S rRNA + 4 S-adenosyl-L-homocysteine + 4 H(+). In terms of biological role, specifically dimethylates two adjacent adenosines (A1518 and A1519) in the loop of a conserved hairpin near the 3'-end of 16S rRNA in the 30S particle. May play a critical role in biogenesis of 30S subunits. This Streptococcus pneumoniae (strain Hungary19A-6) protein is Ribosomal RNA small subunit methyltransferase A.